We begin with the raw amino-acid sequence, 620 residues long: Chaperone protein HscA homolog (620 aa).

It belongs to the heat shock protein 70 family.

Functionally, chaperone involved in the maturation of iron-sulfur cluster-containing proteins. Has a low intrinsic ATPase activity which is markedly stimulated by HscB. The protein is Chaperone protein HscA homolog of Shewanella sp. (strain MR-7).